A 139-amino-acid chain; its full sequence is MLERIGISLEDGLLEQFDKLIAEKGYVNRSEAIRDLIRDALVQRAFTESSGREERVAVVTLVYDHDSSSLAQKLAHIQHENHRAVVSALHVHMDPHNCLEVLVLRGRGKDVVAMGESLVATRGVKYGKLVPATAGHDLG.

Ni(2+)-binding residues include His79, His90, His92, and Cys98.

Belongs to the transcriptional regulatory CopG/NikR family. Ni(2+) serves as cofactor.

In terms of biological role, transcriptional regulator. The polypeptide is Putative nickel-responsive regulator (Anaeromyxobacter dehalogenans (strain 2CP-1 / ATCC BAA-258)).